The primary structure comprises 396 residues: L-aspartate--glyoxylate aminotransferase (396 aa).

N6-(pyridoxal phosphate)lysine is present on Lys196.

Belongs to the class-V pyridoxal-phosphate-dependent aminotransferase family. Requires pyridoxal 5'-phosphate as cofactor.

The enzyme catalyses oxaloacetate + glycine = glyoxylate + L-aspartate. In terms of biological role, catalyzes the transamination of glyoxylate into glycine using L-aspartate as the preferred amino group donor. Is essential for the growth of P.denitrificans in the presence of glycolate and glyoxylate since it functions in glyoxylate assimilation via the beta-hydroxyaspartate cycle (BHAC). Can catalyze the reverse reaction in vitro, and also use L-serine and L-glutamate as amino group donor, but with much less efficiency than L-aspartate. The polypeptide is L-aspartate--glyoxylate aminotransferase (Paracoccus denitrificans (strain Pd 1222)).